Consider the following 223-residue polypeptide: ATP phosphoribosyltransferase (223 aa).

Belongs to the ATP phosphoribosyltransferase family. Short subfamily. Heteromultimer composed of HisG and HisZ subunits.

It is found in the cytoplasm. It catalyses the reaction 1-(5-phospho-beta-D-ribosyl)-ATP + diphosphate = 5-phospho-alpha-D-ribose 1-diphosphate + ATP. The protein operates within amino-acid biosynthesis; L-histidine biosynthesis; L-histidine from 5-phospho-alpha-D-ribose 1-diphosphate: step 1/9. In terms of biological role, catalyzes the condensation of ATP and 5-phosphoribose 1-diphosphate to form N'-(5'-phosphoribosyl)-ATP (PR-ATP). Has a crucial role in the pathway because the rate of histidine biosynthesis seems to be controlled primarily by regulation of HisG enzymatic activity. This is ATP phosphoribosyltransferase from Novosphingobium aromaticivorans (strain ATCC 700278 / DSM 12444 / CCUG 56034 / CIP 105152 / NBRC 16084 / F199).